A 415-amino-acid chain; its full sequence is Putative competence-damage inducible protein (415 aa).

The protein belongs to the CinA family.

This Listeria innocua serovar 6a (strain ATCC BAA-680 / CLIP 11262) protein is Putative competence-damage inducible protein.